A 386-amino-acid polypeptide reads, in one-letter code: FHA domain-containing protein At4g14490 (386 aa).

In terms of domain architecture, FHA spans 28–78; sequence IRVGRIVRGNEIAIKDAGISTKHLRIESDSGNWVIQDLGSSNGTLLNSNAL. The interval 286–311 is disordered; it reads KNKGKNKKADQKPLKSFENDEVTDSG. A compositionally biased stretch (basic and acidic residues) spans 292–303; that stretch reads KKADQKPLKSFE.

The chain is FHA domain-containing protein At4g14490 from Arabidopsis thaliana (Mouse-ear cress).